The primary structure comprises 52 residues: Alpha-crystallin B chain (52 aa).

Belongs to the small heat shock protein (HSP20) family. As to quaternary structure, homodimer. Aggregates with homologous proteins, including alpha-A-crystallin and the small heat shock protein HSPB1, to form large heteromeric complexes.

Functionally, may contribute to the transparency and refractive index of the lens. The polypeptide is Alpha-crystallin B chain (CRYAB) (Eudromia elegans (Elegant crested-tinamou)).